The chain runs to 268 residues: uncharacterized protein (268 aa).

Transmembrane regions (helical) follow at residues 32-52 (SLLL…IFFI), 70-90 (VFVG…AFLF), 125-145 (GVSS…FYIF), and 237-257 (IKYI…AYLT).

The protein belongs to the CbiQ family.

The protein localises to the cell membrane. This is an uncharacterized protein from Methanocaldococcus jannaschii (strain ATCC 43067 / DSM 2661 / JAL-1 / JCM 10045 / NBRC 100440) (Methanococcus jannaschii).